The chain runs to 358 residues: 3-dehydroquinate synthase (358 aa).

NAD(+) contacts are provided by residues 105 to 109 (GVVGD), 129 to 130 (TT), K142, K151, and 169 to 172 (TLKT). Zn(2+) is bound by residues E184, H245, and H262.

It belongs to the sugar phosphate cyclases superfamily. Dehydroquinate synthase family. It depends on NAD(+) as a cofactor. Co(2+) serves as cofactor. Zn(2+) is required as a cofactor.

Its subcellular location is the cytoplasm. It catalyses the reaction 7-phospho-2-dehydro-3-deoxy-D-arabino-heptonate = 3-dehydroquinate + phosphate. It participates in metabolic intermediate biosynthesis; chorismate biosynthesis; chorismate from D-erythrose 4-phosphate and phosphoenolpyruvate: step 2/7. Catalyzes the conversion of 3-deoxy-D-arabino-heptulosonate 7-phosphate (DAHP) to dehydroquinate (DHQ). The sequence is that of 3-dehydroquinate synthase from Enterococcus faecalis (strain ATCC 47077 / OG1RF).